An 80-amino-acid chain; its full sequence is Exodeoxyribonuclease 7 small subunit (80 aa).

Belongs to the XseB family. As to quaternary structure, heterooligomer composed of large and small subunits.

The protein resides in the cytoplasm. The enzyme catalyses Exonucleolytic cleavage in either 5'- to 3'- or 3'- to 5'-direction to yield nucleoside 5'-phosphates.. Its function is as follows. Bidirectionally degrades single-stranded DNA into large acid-insoluble oligonucleotides, which are then degraded further into small acid-soluble oligonucleotides. This chain is Exodeoxyribonuclease 7 small subunit, found in Photobacterium profundum (strain SS9).